The chain runs to 253 residues: Proteasome subunit alpha type-3 (253 aa).

The interval 230-253 (ELTEKARKAGDAANKDEDSDNETH) is disordered. Residues 231 to 253 (LTEKARKAGDAANKDEDSDNETH) are compositionally biased toward basic and acidic residues. Ser248 is modified (phosphoserine).

It belongs to the peptidase T1A family. The 26S proteasome consists of a 20S proteasome core and two 19S regulatory subunits. The 20S proteasome core is composed of 28 subunits that are arranged in four stacked rings, resulting in a barrel-shaped structure. The two end rings are each formed by seven alpha subunits, and the two central rings are each formed by seven beta subunits. The catalytic chamber with the active sites is on the inside of the barrel. Interacts with ntc.

It is found in the cytoplasm. The protein resides in the nucleus. The proteasome is a multicatalytic proteinase complex which is characterized by its ability to cleave peptides with Arg, Phe, Tyr, Leu, and Glu adjacent to the leaving group at neutral or slightly basic pH. The proteasome has an ATP-dependent proteolytic activity. In Drosophila melanogaster (Fruit fly), this protein is Proteasome subunit alpha type-3 (Prosalpha7).